A 310-amino-acid chain; its full sequence is Cell division protein FtsQ (310 aa).

A disordered region spans residues 1 to 57 (MSEPENTAEDKDAEAAISADAVESETTADGGENPAEGESAEGPRMRARRERMERREA). The Cytoplasmic segment spans residues 1–95 (MSEPENTAED…AGRGKVQGLQ (95 aa)). A helical membrane pass occupies residues 96–116 (TLLLVVLLALIAVGLGSILYF). The Extracellular portion of the chain corresponds to 117-310 (TPLMSVRQTV…VSSPDLPTVK (194 aa)). The 69-residue stretch at 120-188 (MSVRQTVVTG…STLRVTIVER (69 aa)) folds into the POTRA domain.

It belongs to the FtsQ/DivIB family. FtsQ subfamily.

The protein resides in the cell membrane. Its function is as follows. Essential cell division protein. The protein is Cell division protein FtsQ of Mycobacteroides abscessus (strain ATCC 19977 / DSM 44196 / CCUG 20993 / CIP 104536 / JCM 13569 / NCTC 13031 / TMC 1543 / L948) (Mycobacterium abscessus).